The primary structure comprises 251 residues: GTP cyclohydrolase 1 type 2 homolog (251 aa).

Histidine 62, histidine 63, aspartate 103, histidine 215, and glutamate 219 together coordinate a divalent metal cation.

This sequence belongs to the GTP cyclohydrolase I type 2/NIF3 family. As to quaternary structure, homohexamer.

This chain is GTP cyclohydrolase 1 type 2 homolog, found in Mycoplasmopsis pulmonis (strain UAB CTIP) (Mycoplasma pulmonis).